The following is a 213-amino-acid chain: Outer-membrane lipoprotein carrier protein (213 aa).

The first 18 residues, Met-1–Ala-18, serve as a signal peptide directing secretion.

The protein belongs to the LolA family. Monomer.

It is found in the periplasm. Its function is as follows. Participates in the translocation of lipoproteins from the inner membrane to the outer membrane. Only forms a complex with a lipoprotein if the residue after the N-terminal Cys is not an aspartate (The Asp acts as a targeting signal to indicate that the lipoprotein should stay in the inner membrane). This chain is Outer-membrane lipoprotein carrier protein, found in Albidiferax ferrireducens (strain ATCC BAA-621 / DSM 15236 / T118) (Rhodoferax ferrireducens).